Here is a 202-residue protein sequence, read N- to C-terminus: Small ribosomal subunit protein uS4 (202 aa).

Positions 22-43 (TRKNARRAYPPGQHGQNRRKRS) are disordered. One can recognise an S4 RNA-binding domain in the interval 90–152 (MRLDNTVFRL…DKSRKLVQAN (63 aa)).

It belongs to the universal ribosomal protein uS4 family. Part of the 30S ribosomal subunit. Contacts protein S5. The interaction surface between S4 and S5 is involved in control of translational fidelity.

Functionally, one of the primary rRNA binding proteins, it binds directly to 16S rRNA where it nucleates assembly of the body of the 30S subunit. With S5 and S12 plays an important role in translational accuracy. The protein is Small ribosomal subunit protein uS4 of Gloeothece citriformis (strain PCC 7424) (Cyanothece sp. (strain PCC 7424)).